The primary structure comprises 130 residues: Small ribosomal subunit protein uS8 (130 aa).

This sequence belongs to the universal ribosomal protein uS8 family. In terms of assembly, part of the 30S ribosomal subunit.

Its function is as follows. One of the primary rRNA binding proteins, it binds directly to 16S rRNA central domain where it helps coordinate assembly of the platform of the 30S subunit. This Halorubrum lacusprofundi (strain ATCC 49239 / DSM 5036 / JCM 8891 / ACAM 34) protein is Small ribosomal subunit protein uS8.